A 149-amino-acid polypeptide reads, in one-letter code: Cyanate hydratase (149 aa).

Active-site residues include arginine 90, glutamate 93, and serine 116.

It belongs to the cyanase family.

The catalysed reaction is cyanate + hydrogencarbonate + 3 H(+) = NH4(+) + 2 CO2. Its function is as follows. Catalyzes the reaction of cyanate with bicarbonate to produce ammonia and carbon dioxide. This is Cyanate hydratase from Aquifex aeolicus (strain VF5).